Reading from the N-terminus, the 287-residue chain is Bifunctional protein FolD (287 aa).

Residues 165 to 167, serine 190, and isoleucine 231 contribute to the NADP(+) site; that span reads GRS.

The protein belongs to the tetrahydrofolate dehydrogenase/cyclohydrolase family. Homodimer.

The catalysed reaction is (6R)-5,10-methylene-5,6,7,8-tetrahydrofolate + NADP(+) = (6R)-5,10-methenyltetrahydrofolate + NADPH. It catalyses the reaction (6R)-5,10-methenyltetrahydrofolate + H2O = (6R)-10-formyltetrahydrofolate + H(+). The protein operates within one-carbon metabolism; tetrahydrofolate interconversion. Functionally, catalyzes the oxidation of 5,10-methylenetetrahydrofolate to 5,10-methenyltetrahydrofolate and then the hydrolysis of 5,10-methenyltetrahydrofolate to 10-formyltetrahydrofolate. This is Bifunctional protein FolD from Trichodesmium erythraeum (strain IMS101).